A 261-amino-acid chain; its full sequence is TM2 domain-containing protein 3 (261 aa).

The N-terminal stretch at 1-44 is a signal peptide; it reads MEAAAEPLRSVRHLSRVLLFLSQCYILSGDGSLNLEHSQPLAQA. Residues 45-193 are Extracellular-facing; the sequence is IKDPGPTRTF…RTFPKLLYCN (149 aa). N-linked (GlcNAc...) asparagine glycans are attached at residues Asn101, Asn136, Asn154, Asn171, Asn183, and Asn193. A helical membrane pass occupies residues 194-214; sequence WTGGYKWSTALALSITLGGFG. Residues 197 to 244 form the TM2 domain; sequence GYKWSTALALSITLGGFGADRFYLGQWREGLGKLFSFGGLGIWTLIDV. The Cytoplasmic portion of the chain corresponds to 215–229; sequence ADRFYLGQWREGLGK. The chain crosses the membrane as a helical span at residues 230-250; sequence LFSFGGLGIWTLIDVLLIGVG. The Extracellular portion of the chain corresponds to 251-261; sequence YVGPADGSLYI.

Belongs to the TM2 family.

The protein localises to the membrane. This Mus musculus (Mouse) protein is TM2 domain-containing protein 3 (Tm2d3).